The following is a 379-amino-acid chain: Alcohol dehydrogenase class-2 isozyme 2 (379 aa).

Zn(2+) contacts are provided by C47, H69, C99, C102, C105, C113, and C176. Residues 205 to 210 (GLGGVG), D229, K234, 298 to 300 (VGV), and R374 contribute to the NAD(+) site.

This sequence belongs to the zinc-containing alcohol dehydrogenase family. Class-II subfamily. Homodimer. The cofactor is Zn(2+).

It localises to the cytoplasm. It carries out the reaction a primary alcohol + NAD(+) = an aldehyde + NADH + H(+). It catalyses the reaction a secondary alcohol + NAD(+) = a ketone + NADH + H(+). This is Alcohol dehydrogenase class-2 isozyme 2 (ADH2-2) from Oryctolagus cuniculus (Rabbit).